The following is a 499-amino-acid chain: Lysine--tRNA ligase (499 aa).

Residues Glu409 and Glu416 each contribute to the Mg(2+) site.

This sequence belongs to the class-II aminoacyl-tRNA synthetase family. Homodimer. The cofactor is Mg(2+).

Its subcellular location is the cytoplasm. The catalysed reaction is tRNA(Lys) + L-lysine + ATP = L-lysyl-tRNA(Lys) + AMP + diphosphate. This chain is Lysine--tRNA ligase, found in Thioalkalivibrio sulfidiphilus (strain HL-EbGR7).